Consider the following 382-residue polypeptide: Processive diacylglycerol beta-glucosyltransferase (382 aa).

It belongs to the glycosyltransferase 28 family. UgtP subfamily.

The protein localises to the cell membrane. The catalysed reaction is a 1,2-diacyl-3-O-(beta-D-glucopyranosyl)-sn-glycerol + UDP-alpha-D-glucose = a 1,2-diacyl-3-O-(beta-D-Glc-(1-&gt;6)-beta-D-Glc)-sn-glycerol + UDP + H(+). It carries out the reaction a 1,2-diacyl-3-O-(beta-D-Glc-(1-&gt;6)-beta-D-Glc)-sn-glycerol + UDP-alpha-D-glucose = a 1,2-diacyl-3-O-(beta-D-Glc-(1-&gt;6)-beta-D-Glc-(1-&gt;6)-beta-D-Glc)-sn-glycerol + UDP + H(+). The enzyme catalyses a 1,2-diacyl-sn-glycerol + UDP-alpha-D-glucose = a 1,2-diacyl-3-O-(beta-D-glucopyranosyl)-sn-glycerol + UDP + H(+). The protein operates within glycolipid metabolism; diglucosyl-diacylglycerol biosynthesis. In terms of biological role, processive glucosyltransferase involved in the biosynthesis of both the bilayer- and non-bilayer-forming membrane glucolipids. Is able to successively transfer up to three glucosyl residues to diacylglycerol (DAG), thereby catalyzing the formation of beta-monoglucosyl-DAG (3-O-(beta-D-glucopyranosyl)-1,2-diacyl-sn-glycerol), beta-diglucosyl-DAG (3-O-(beta-D-glucopyranosyl-beta-(1-&gt;6)-D-glucopyranosyl)-1,2-diacyl-sn-glycerol) and beta-triglucosyl-DAG (3-O-(beta-D-glucopyranosyl-beta-(1-&gt;6)-D-glucopyranosyl-beta-(1-&gt;6)-D-glucopyranosyl)-1,2-diacyl-sn-glycerol). Beta-diglucosyl-DAG is the predominant glycolipid found in Bacillales and is also used as a membrane anchor for lipoteichoic acid (LTA). Also seems to be able to form beta-tetraglucosyl-DAG, although this glycolipid has not been found in B.subtilis membrane. UgtP can only use UDP-glucose as sugar donor. This is Processive diacylglycerol beta-glucosyltransferase from Bacillus subtilis (strain 168).